Consider the following 375-residue polypeptide: G-protein coupled estrogen receptor 1 (375 aa).

Met1 carries the N-acetylmethionine modification. The Extracellular segment spans residues 1-62; that stretch reads MAATTPAQDV…QQYVIALFLS (62 aa). N-linked (GlcNAc...) asparagine glycosylation is found at Asn32 and Asn44. The helical transmembrane segment at 63-84 threads the bilayer; that stretch reads CLYTIFLFPIGFVGNILILVVN. Residues 85–96 are Cytoplasmic-facing; that stretch reads ISFREKMTIPDL. Residues 97–120 traverse the membrane as a helical segment; sequence YFINLAAADLILVADSLIEVFNLD. Topologically, residues 121-132 are extracellular; sequence EQYYDIAVLCTF. Cysteines 130 and 207 form a disulfide. A helical transmembrane segment spans residues 133–153; sequence MSLFLQINMYSSVFFLTWMSF. Residues 154–175 are Cytoplasmic-facing; that stretch reads DRYLALAKAMRCGLFRTKHHAR. Residues 176-194 traverse the membrane as a helical segment; the sequence is LSCGLIWMASVSATLVPFT. Over 195–220 the chain is Extracellular; it reads AVHLRHTEEACFCFADVREVQWLEVT. The chain crosses the membrane as a helical span at residues 221-236; it reads LGFIVPFAIIGLCYSL. Over 237–259 the chain is Cytoplasmic; that stretch reads IVRALIRAHRHRGLRPRRQKALR. Residues 260-280 traverse the membrane as a helical segment; that stretch reads MIFAVVLVFFICWLPENVFIS. Residues 281–306 are Extracellular-facing; it reads VHLLQWAQPGDTPCKQSFRHAYPLTG. Residues 307–327 form a helical membrane-spanning segment; that stretch reads HIVNLAAFSNSCLSPLIYSFL. Residues 328–375 lie on the Cytoplasmic side of the membrane; it reads GETFRDKLRLYVAQKTSLPALNRFCHATLKAVIPDSTEQSDVKFSSAV.

It belongs to the G-protein coupled receptor 1 family. Homodimer. Heterodimer; heterodimerizes with other G-protein-coupled receptor (GPCRs) like CRHR1, HTR1A and PAQR8. Interacts with RAMP3; the interaction confers proper subcellular localization and function in cardioprotection. Interacts with KRT7 and KRT8. Interacts with EGFR; the interaction increases after agonist-induced stimulation in cancer-associated fibroblasts (CAF). Interacts with EGFR and ESR1. Interacts (via C-terminus tail motif) with DLG4 (via N-terminus tandem pair of PDZ domains); the interaction is direct and induces the increase of GPER1 protein levels residing at the plasma membrane surface in a estradiol-independent manner. Post-translationally, ubiquitinated; ubiquitination occurs at the plasma membrane and leads to proteasome-mediated degradation. Glycosylated. In terms of tissue distribution, expressed in the brain. Expressed in neurons of the hippocampus, hypothalamic paraventricular nucleus (PVN), supraoptic nucleus (SON) and the median eminence. Expressed in magnocellular neurosecretory cells (MNCs) which secrete oxytocin but not in MNCs which secrete vasopressin. Expressed in glial cells. Expressed in the nucleus ambiguous. Expressed in epithelial cells, in pachytene spermatocytes (PS) (at protein level). Expressed strongly in vascular endothelial cells and poorly in vascular smooth muscle cells (VSMC). Expressed in the brain, lung, pituitary gland, adrenal medulla, renal pelvis and ovary. Expressed in CA1 hippocampus. Expressed weakly in heart, skeletal muscle and kidney.

The protein localises to the nucleus. Its subcellular location is the cytoplasm. The protein resides in the perinuclear region. It localises to the cytoskeleton. It is found in the cytoplasmic vesicle membrane. The protein localises to the cell membrane. Its subcellular location is the basolateral cell membrane. The protein resides in the endoplasmic reticulum membrane. It localises to the early endosome. It is found in the recycling endosome. The protein localises to the golgi apparatus. Its subcellular location is the trans-Golgi network. The protein resides in the golgi apparatus membrane. It localises to the cell projection. It is found in the dendrite. The protein localises to the dendritic spine membrane. Its subcellular location is the axon. The protein resides in the postsynaptic density. It localises to the mitochondrion membrane. Its function is as follows. G-protein coupled estrogen receptor that binds to 17-beta-estradiol (E2) with high affinity, leading to rapid and transient activation of numerous intracellular signaling pathways. Stimulates cAMP production, calcium mobilization and tyrosine kinase Src inducing the release of heparin-bound epidermal growth factor (HB-EGF) and subsequent transactivation of the epidermal growth factor receptor (EGFR), activating downstream signaling pathways such as PI3K/Akt and ERK/MAPK. Mediates pleiotropic functions among others in the cardiovascular, endocrine, reproductive, immune and central nervous systems. Has a role in cardioprotection by reducing cardiac hypertrophy and perivascular fibrosis in a RAMP3-dependent manner. Regulates arterial blood pressure by stimulating vasodilation and reducing vascular smooth muscle and microvascular endothelial cell proliferation. Plays a role in blood glucose homeostasis contributing to the insulin secretion response by pancreatic beta cells. Triggers mitochondrial apoptosis during pachytene spermatocyte differentiation. Stimulates uterine epithelial cell proliferation. Enhances uterine contractility in response to oxytocin. Contributes to thymic atrophy by inducing apoptosis. Attenuates TNF-mediated endothelial expression of leukocyte adhesion molecules. Promotes neuritogenesis in developing hippocampal neurons. Plays a role in acute neuroprotection against NMDA-induced excitotoxic neuronal death. Increases firing activity and intracellular calcium oscillations in luteinizing hormone-releasing hormone (LHRH) neurons. Inhibits early osteoblast proliferation at growth plate during skeletal development. Inhibits mature adipocyte differentiation and lipid accumulation. Involved in the recruitment of beta-arrestin 2 ARRB2 at the plasma membrane in epithelial cells. Also functions as a receptor for aldosterone mediating rapid regulation of vascular contractibility through the PI3K/ERK signaling pathway. Involved in cancer progression regulation. Stimulates cancer-associated fibroblast (CAF) proliferation by a rapid genomic response through the EGFR/ERK transduction pathway. Associated with EGFR, may act as a transcription factor activating growth regulatory genes (c-fos, cyclin D1). Promotes integrin alpha-5/beta-1 and fibronectin (FN) matrix assembly in breast cancer cells. The chain is G-protein coupled estrogen receptor 1 (Gper1) from Rattus norvegicus (Rat).